The sequence spans 200 residues: WUSCHEL-related homeobox 9 (200 aa).

The homeobox; WUS-type DNA-binding region spans 10–74 (VKCGRWNPTA…NHKARERHHH (65 aa)). Residues 70–80 (ERHHHKKRRRG) show a composition bias toward basic residues. The interval 70-118 (ERHHHKKRRRGASSPDSGSNDDDGRAAAHEGDADLVLQPPESKREARSY) is disordered. Residues 91–101 (DDGRAAAHEGD) are compositionally biased toward basic and acidic residues.

This sequence belongs to the WUS homeobox family. Specifically expressed in the central cells of the quiescent center (QC) of the root.

The protein resides in the nucleus. In terms of biological role, transcription factor which may be involved in the specification and maintenance of the stem cells (QC cells) in the root apical meristem (RAM). The sequence is that of WUSCHEL-related homeobox 9 (WOX9) from Oryza sativa subsp. japonica (Rice).